We begin with the raw amino-acid sequence, 287 residues long: Glutamate racemase (287 aa).

Substrate contacts are provided by residues 32–33 and 64–65; these read DS and YG. Cysteine 96 serves as the catalytic Proton donor/acceptor. Substrate is bound at residue 97–98; that stretch reads NT. Residue cysteine 208 is the Proton donor/acceptor of the active site. 209-210 serves as a coordination point for substrate; the sequence is TH.

The protein belongs to the aspartate/glutamate racemases family.

It carries out the reaction L-glutamate = D-glutamate. It functions in the pathway cell wall biogenesis; peptidoglycan biosynthesis. Provides the (R)-glutamate required for cell wall biosynthesis. This Yersinia enterocolitica serotype O:8 / biotype 1B (strain NCTC 13174 / 8081) protein is Glutamate racemase.